We begin with the raw amino-acid sequence, 150 residues long: MSGELSNRFQGGKAFGLLKARQERRLAEINREFLCDQKYSDEENLPEKLTAFKEKYMEFDLNNEGEIDLMSLKRMMEKLGVPKTHLEMKKMISEVTGGVSDTISYRDFVNMMLGKRSAVLKLVMMFEGKANESSPKPVGPPPERDIASLP.

The residue at position 2 (Ser-2) is an N-acetylserine. Ser-2 is modified (phosphoserine). The 36-residue stretch at 47–82 (EKLTAFKEKYMEFDLNNEGEIDLMSLKRMMEKLGVP) folds into the EF-hand 1 domain. Positions 60, 62, 64, and 66 each coordinate Ca(2+). In terms of domain architecture, EF-hand 2; degenerate spans 83–117 (KTHLEMKKMISEVTGGVSDTISYRDFVNMMLGKRS). Positions 129–150 (KANESSPKPVGPPPERDIASLP) are disordered. Ser-134 bears the Phosphoserine mark.

In terms of assembly, homodimer (Potential). Monomer.

The protein localises to the cytoplasm. The protein resides in the cytoskeleton. Its subcellular location is the cell projection. It localises to the ruffle membrane. Its function is as follows. Actin-binding protein that promotes actin bundling. May neither bind calcium nor depend on calcium for function. This Homo sapiens (Human) protein is Allograft inflammatory factor 1-like (AIF1L).